We begin with the raw amino-acid sequence, 146 residues long: Prefoldin subunit alpha (146 aa).

Belongs to the prefoldin alpha subunit family. As to quaternary structure, heterohexamer of two alpha and four beta subunits.

The protein resides in the cytoplasm. Its function is as follows. Molecular chaperone capable of stabilizing a range of proteins. Seems to fulfill an ATP-independent, HSP70-like function in archaeal de novo protein folding. The sequence is that of Prefoldin subunit alpha from Methanococcus vannielii (strain ATCC 35089 / DSM 1224 / JCM 13029 / OCM 148 / SB).